The chain runs to 227 residues: uncharacterized protein (227 aa).

The first 22 residues, 1–22 (MDSVMRKSLFLLLPLVVTNAHA), serve as a signal peptide directing secretion.

This is an uncharacterized protein from Salmonella typhi.